The primary structure comprises 574 residues: Aspartate--tRNA ligase (574 aa).

Glu172 provides a ligand contact to L-aspartate. Residues 196–199 (QIFK) form an aspartate region. An L-aspartate-binding site is contributed by Arg218. ATP is bound by residues 218 to 220 (RDE) and Gln227. His453 is a binding site for L-aspartate. Glu487 is a binding site for ATP. An L-aspartate-binding site is contributed by Arg494. 539–542 (GLDR) serves as a coordination point for ATP.

It belongs to the class-II aminoacyl-tRNA synthetase family. Type 1 subfamily. As to quaternary structure, homodimer.

The protein localises to the cytoplasm. The enzyme catalyses tRNA(Asp) + L-aspartate + ATP = L-aspartyl-tRNA(Asp) + AMP + diphosphate. Its function is as follows. Catalyzes the attachment of L-aspartate to tRNA(Asp) in a two-step reaction: L-aspartate is first activated by ATP to form Asp-AMP and then transferred to the acceptor end of tRNA(Asp). This chain is Aspartate--tRNA ligase, found in Blochmanniella pennsylvanica (strain BPEN).